We begin with the raw amino-acid sequence, 86 residues long: Protein P17 (86 aa).

Residues 63-86 (SPAEKPDNQPELTGITFEGDNNDQ) form a disordered region.

As to quaternary structure, homotetramer.

In terms of biological role, assembly protein that acts late in phage assembly, after capsid protein folding and multimerization, and sorting of membrane proteins has occurred. The major coat protein P3 and two assembly factors (P10 and P17) are needed during the assembly of the virus particle inside the host cell, when the capsid protein multimers are capable of enclosing the host-derived membrane, containing the virus-encoded membrane-associated proteins. In Enterobacteria phage PRD1 (Bacteriophage PRD1), this protein is Protein P17 (XVII).